Consider the following 223-residue polypeptide: Killer cell lectin-like receptor subfamily B member 1B allele B (223 aa).

Residues 1 to 43 (MDSTTLVYADLNLARIQEPKHDSPPSLSPDTCRCPRWHRLALK) lie on the Cytoplasmic side of the membrane. Residues 6-11 (LVYADL) carry the ITIM motif motif. The LCK-binding motif motif lies at 32 to 35 (CRCP). The chain crosses the membrane as a helical; Signal-anchor for type II membrane protein span at residues 44-64 (FGCAGLILLVLVVIGLCVLVL). The Extracellular portion of the chain corresponds to 65–223 (SVQKSSVQKI…LNHETPCNDS (159 aa)). Residues 101–211 (HRDKCFHVSQ…CSSDNRWICQ (111 aa)) form the C-type lectin domain. Cystine bridges form between C122/C210 and C189/C202.

In terms of assembly, homodimer; disulfide-linked. Interacts with tyrosine kinase LCK. Binds PTPN6/SHP-1 in a phosphorylation-dependent manner. In terms of tissue distribution, expressed in NK cells and a subset of T-cells.

The protein resides in the membrane. Its function is as follows. Receptor for CLEC2D/OCIL. Ligand-binding contributes to inhibition of cytotoxic natural killer (NK) cells. May mediate MHC class I-independent 'missing-self' recognition of allografts, tumor cells and virus-infected cells. The protein is Killer cell lectin-like receptor subfamily B member 1B allele B (Klrb1b) of Mus musculus (Mouse).